A 493-amino-acid chain; its full sequence is Lysine--tRNA ligase (493 aa).

The 'HIGH' region motif lies at 26–34 (PSGHIHLGN). The 'KMSKS' region signature appears at 270-274 (AMKSS).

Belongs to the class-I aminoacyl-tRNA synthetase family.

The protein resides in the cytoplasm. The enzyme catalyses tRNA(Lys) + L-lysine + ATP = L-lysyl-tRNA(Lys) + AMP + diphosphate. This chain is Lysine--tRNA ligase (lysS), found in Archaeoglobus fulgidus (strain ATCC 49558 / DSM 4304 / JCM 9628 / NBRC 100126 / VC-16).